The chain runs to 30 residues: Thaumatin-like protein (30 aa).

The protein belongs to the thaumatin family.

The protein resides in the secreted. Functionally, has antifungal activity against C.comatus, F.oxysporum and P.ostreatus. This Phaseolus vulgaris (Kidney bean) protein is Thaumatin-like protein.